Consider the following 268-residue polypeptide: MRLIIRPTYEDISKWAANHVAQKIKEFSPTREKPFILGLPTGSSPIGMYKNLIKLYKDEKISFQNVITFNMDEYIGIEKNHPESYHSFMWKNFFSHIDIKKENINILNGNALNLKKECEEYEKKIKSFGGIMLFVGGIGPDGHIAFNEPGSSLTSRTRIKTLTQDTIIANSRFFEGNVNKVPKSALTVGVGTIMDSQEILIIVNGHNKARALKHAIEKGVNHMWTISALQLHKNTIIVSDKKATYELKIGTVEYFNDIERENFNNDLK.

The active-site Proton acceptor; for enolization step is D72. Catalysis depends on D141, which acts as the For ring-opening step. H143 serves as the catalytic Proton acceptor; for ring-opening step. The For ring-opening step role is filled by E148.

This sequence belongs to the glucosamine/galactosamine-6-phosphate isomerase family. NagB subfamily.

It carries out the reaction alpha-D-glucosamine 6-phosphate + H2O = beta-D-fructose 6-phosphate + NH4(+). It functions in the pathway amino-sugar metabolism; N-acetylneuraminate degradation; D-fructose 6-phosphate from N-acetylneuraminate: step 5/5. With respect to regulation, allosterically activated by N-acetylglucosamine 6-phosphate (GlcNAc6P). In terms of biological role, catalyzes the reversible isomerization-deamination of glucosamine 6-phosphate (GlcN6P) to form fructose 6-phosphate (Fru6P) and ammonium ion. In Borrelia garinii subsp. bavariensis (strain ATCC BAA-2496 / DSM 23469 / PBi) (Borreliella bavariensis), this protein is Glucosamine-6-phosphate deaminase.